The chain runs to 350 residues: Phosphoribosylformylglycinamidine cyclo-ligase (350 aa).

The protein belongs to the AIR synthase family.

The protein localises to the cytoplasm. The catalysed reaction is 2-formamido-N(1)-(5-O-phospho-beta-D-ribosyl)acetamidine + ATP = 5-amino-1-(5-phospho-beta-D-ribosyl)imidazole + ADP + phosphate + H(+). It functions in the pathway purine metabolism; IMP biosynthesis via de novo pathway; 5-amino-1-(5-phospho-D-ribosyl)imidazole from N(2)-formyl-N(1)-(5-phospho-D-ribosyl)glycinamide: step 2/2. This chain is Phosphoribosylformylglycinamidine cyclo-ligase, found in Cupriavidus metallidurans (strain ATCC 43123 / DSM 2839 / NBRC 102507 / CH34) (Ralstonia metallidurans).